We begin with the raw amino-acid sequence, 212 residues long: Uridine kinase (212 aa).

Residue 13-20 (GASASGKS) participates in ATP binding.

It belongs to the uridine kinase family.

Its subcellular location is the cytoplasm. The enzyme catalyses uridine + ATP = UMP + ADP + H(+). It carries out the reaction cytidine + ATP = CMP + ADP + H(+). It functions in the pathway pyrimidine metabolism; CTP biosynthesis via salvage pathway; CTP from cytidine: step 1/3. It participates in pyrimidine metabolism; UMP biosynthesis via salvage pathway; UMP from uridine: step 1/1. The chain is Uridine kinase from Shewanella halifaxensis (strain HAW-EB4).